The chain runs to 314 residues: Serine/threonine-protein phosphatase SIT4 (314 aa).

Mn(2+)-binding residues include Asp-53, His-55, Asp-85, and Asn-117. Residue His-118 is the Proton donor of the active site. Positions 167 and 241 each coordinate Mn(2+).

This sequence belongs to the PPP phosphatase family. PP-6 (PP-V) subfamily. As to quaternary structure, interacts with MDS3. Requires Mn(2+) as cofactor.

The protein resides in the cytoplasm. It carries out the reaction O-phospho-L-seryl-[protein] + H2O = L-seryl-[protein] + phosphate. It catalyses the reaction O-phospho-L-threonyl-[protein] + H2O = L-threonyl-[protein] + phosphate. Functionally, serine/threonine protein phosphatase which is involved in the dephosphorylation of the large subunit of RNA polymerase II. Is required in late G1 for normal G1 cyclin expression, bud initiation and expression of certain genes that are periodically expressed during late G1. Plays a role during hyphal growth through the regulation of cell wall biogenesis, osmosensing and protein translation. Involved in virulence in a mouse systemic infection model. This Candida albicans (strain SC5314 / ATCC MYA-2876) (Yeast) protein is Serine/threonine-protein phosphatase SIT4 (SIT4).